The chain runs to 122 residues: Large ribosomal subunit protein uL14 (122 aa).

The protein belongs to the universal ribosomal protein uL14 family. In terms of assembly, part of the 50S ribosomal subunit. Forms a cluster with proteins L3 and L19. In the 70S ribosome, L14 and L19 interact and together make contacts with the 16S rRNA in bridges B5 and B8.

Its function is as follows. Binds to 23S rRNA. Forms part of two intersubunit bridges in the 70S ribosome. The protein is Large ribosomal subunit protein uL14 of Mycolicibacterium gilvum (strain PYR-GCK) (Mycobacterium gilvum (strain PYR-GCK)).